Consider the following 557-residue polypeptide: Fatty acyl-CoA hydrolase precursor, medium chain (557 aa).

The signal sequence occupies residues 1 to 25; the sequence is MATEKNTLLSLILTAGITALVATGQ. The cysteines at positions 93 and 122 are disulfide-linked. Residue Ser-227 is the Acyl-ester intermediate of the active site. Residues Glu-345 and His-460 each act as charge relay system in the active site. N-linked (GlcNAc...) asparagine glycosylation occurs at Asn-476.

The protein belongs to the type-B carboxylesterase/lipase family. In terms of tissue distribution, highest levels in uropygial gland, much lower in liver and kidney.

Its function is as follows. Fatty acid biosynthesis chain termination and release of the free fatty acid product is achieved by hydrolysis of the thio ester by a thioesterase. This thioesterase may be associated with peroxisome proliferation and may play a role in the production of 3-hydroxy fatty acid diester pheromones. The chain is Fatty acyl-CoA hydrolase precursor, medium chain from Anas platyrhynchos (Mallard).